The sequence spans 403 residues: Imidazolonepropionase (403 aa).

The Fe(3+) site is built by histidine 69 and histidine 71. Residues histidine 69 and histidine 71 each coordinate Zn(2+). 4-imidazolone-5-propanoate-binding residues include arginine 78, tyrosine 141, and histidine 174. Position 141 (tyrosine 141) interacts with N-formimidoyl-L-glutamate. Histidine 239 is a Fe(3+) binding site. Residue histidine 239 participates in Zn(2+) binding. Glutamine 242 contributes to the 4-imidazolone-5-propanoate binding site. Aspartate 314 is a binding site for Fe(3+). Aspartate 314 provides a ligand contact to Zn(2+). N-formimidoyl-L-glutamate is bound by residues asparagine 316 and glycine 318. Position 319 (serine 319) interacts with 4-imidazolone-5-propanoate.

The protein belongs to the metallo-dependent hydrolases superfamily. HutI family. Requires Zn(2+) as cofactor. It depends on Fe(3+) as a cofactor.

The protein resides in the cytoplasm. It carries out the reaction 4-imidazolone-5-propanoate + H2O = N-formimidoyl-L-glutamate. The protein operates within amino-acid degradation; L-histidine degradation into L-glutamate; N-formimidoyl-L-glutamate from L-histidine: step 3/3. Catalyzes the hydrolytic cleavage of the carbon-nitrogen bond in imidazolone-5-propanoate to yield N-formimidoyl-L-glutamate. It is the third step in the universal histidine degradation pathway. In Legionella pneumophila (strain Lens), this protein is Imidazolonepropionase.